Here is a 315-residue protein sequence, read N- to C-terminus: Ribose-phosphate pyrophosphokinase (315 aa).

Residues 37–39 (DGE) and 96–97 (RQ) each bind ATP. Residues histidine 131 and aspartate 170 each coordinate Mg(2+). Residue lysine 194 is part of the active site. Residues arginine 196, aspartate 220, and 224 to 228 (DTGGT) contribute to the D-ribose 5-phosphate site.

This sequence belongs to the ribose-phosphate pyrophosphokinase family. Class I subfamily. Homohexamer. Mg(2+) is required as a cofactor.

It localises to the cytoplasm. It carries out the reaction D-ribose 5-phosphate + ATP = 5-phospho-alpha-D-ribose 1-diphosphate + AMP + H(+). Its pathway is metabolic intermediate biosynthesis; 5-phospho-alpha-D-ribose 1-diphosphate biosynthesis; 5-phospho-alpha-D-ribose 1-diphosphate from D-ribose 5-phosphate (route I): step 1/1. In terms of biological role, involved in the biosynthesis of the central metabolite phospho-alpha-D-ribosyl-1-pyrophosphate (PRPP) via the transfer of pyrophosphoryl group from ATP to 1-hydroxyl of ribose-5-phosphate (Rib-5-P). The sequence is that of Ribose-phosphate pyrophosphokinase from Buchnera aphidicola subsp. Acyrthosiphon pisum (strain APS) (Acyrthosiphon pisum symbiotic bacterium).